A 152-amino-acid chain; its full sequence is Nucleoside diphosphate kinase A (152 aa).

Residues lysine 12, phenylalanine 60, arginine 88, and threonine 94 each contribute to the ATP site. A Glycyl lysine isopeptide (Lys-Gly) (interchain with G-Cter in ubiquitin) cross-link involves residue lysine 100. ATP is bound by residues arginine 105 and asparagine 115. Histidine 118 serves as the catalytic Pros-phosphohistidine intermediate. Residues serine 120, serine 122, and serine 125 each carry the phosphoserine modification.

The protein belongs to the NDK family. As to quaternary structure, hexamer of two different chains: An and B (A6, A5B, A4B2, A3B3, A2B4, AB5, B6). Interacts with PRUNE1. Component of the SET complex, composed of at least ANP32A, APEX1, HMGB2, NME1, SET and TREX1. Within this complex, interacts directly with SET. Also interacts with TREX1, but only following translocation to the nucleus. The cofactor is Mg(2+).

It is found in the cytoplasm. The protein localises to the nucleus. It carries out the reaction a 2'-deoxyribonucleoside 5'-diphosphate + ATP = a 2'-deoxyribonucleoside 5'-triphosphate + ADP. The enzyme catalyses a ribonucleoside 5'-diphosphate + ATP = a ribonucleoside 5'-triphosphate + ADP. With respect to regulation, autophosphorylation at His-118 increases serine/threonine protein kinase activity of the enzyme. Interaction with the SET complex inhibits exonuclease activity. Its function is as follows. Major role in the synthesis of nucleoside triphosphates other than ATP. The ATP gamma phosphate is transferred to the NDP beta phosphate via a ping-pong mechanism, using a phosphorylated active-site intermediate. Possesses nucleoside-diphosphate kinase, serine/threonine-specific protein kinase, geranyl and farnesyl pyrophosphate kinase, histidine protein kinase and 3'-5' exonuclease activities. Involved in cell proliferation, differentiation and development, signal transduction, G protein-coupled receptor endocytosis, and gene expression. Required for neural development including neural patterning and cell fate determination. During GZMA-mediated cell death, works in concert with TREX1. NME1 nicks one strand of DNA and TREX1 removes bases from the free 3' end to enhance DNA damage and prevent DNA end reannealing and rapid repair. In Rattus norvegicus (Rat), this protein is Nucleoside diphosphate kinase A (Nme1).